The chain runs to 7214 residues: Nonribosomal peptide synthetase atnA (7214 aa).

Positions 257–651 (ERKALEQPHA…VGRKDTQVKI (395 aa)) are adenylation 1. The region spanning 786 to 862 (EPVTETEKAV…AMSQIAVELS (77 aa)) is the Carrier 1 domain. Residue S823 is modified to O-(pantetheine 4'-phosphoryl)serine. The tract at residues 899–1318 (EDAYPATALQ…LVSQKDYTQI (420 aa)) is condensation 1. The segment at 1340–1735 (QVLATPDAPA…ARKDTQAKVR (396 aa)) is adenylation 2. In terms of domain architecture, Carrier 2 spans 1877 to 1953 (QPTSDIEKKV…ALAGRAQYIE (77 aa)). The residue at position 1914 (S1914) is an O-(pantetheine 4'-phosphoryl)serine. Positions 1962–2384 (PEAEVIDEWF…RQVLETGIDE (423 aa)) are epimerization. The condensation 2 stretch occupies residues 2431–2845 (SPCSPMQLGL…MLSPLDRASL (415 aa)). Residues 2866 to 3262 (QNARKRPHAL…VGRKDTQVKV (397 aa)) are adenylation 3. Residues 3398 to 3472 (ALETPMEETI…DMARIVVAAY (75 aa)) form the Carrier 3 domain. Position 3433 is an O-(pantetheine 4'-phosphoryl)serine (S3433). Positions 3510-3904 (VEDVYPSTSL…QLCENEDGRL (395 aa)) are condensation 3. The segment at 3943-4339 (ERARLHPDLL…VGRKDSQVKL (397 aa)) is adenylation 4. The Carrier 4 domain maps to 4476–4552 (VPGSEAEKVI…ELAGRVTSIS (77 aa)). S4513 is modified (O-(pantetheine 4'-phosphoryl)serine). Positions 4601–5033 (VEDVYPCSPL…TSAAMRAQLL (433 aa)) are condensation 4. Positions 5051-5446 (FHRTALRYPE…VGRKDTQIKF (396 aa)) are adenylation 5. Residues 5489 to 5515 (FITTEGGSGHENKGSPSLKGSSGDPVS) are disordered. The region spanning 5591-5667 (APRTAMEKRL…QMANIVARNA (77 aa)) is the Carrier 5 domain. Residue S5628 is modified to O-(pantetheine 4'-phosphoryl)serine. A condensation 5 region spans residues 5707–6123 (QDVYPCTPLQ…HLLGDNEIKM (417 aa)). Residues 6145–6543 (ERAVLQPEAI…GRKDTQIKLR (399 aa)) are adenylation 6. One can recognise a Carrier 6 domain in the interval 6683 to 6766 (DPADKLALAL…DVARMIEHGN (84 aa)). Residue S6725 is modified to O-(pantetheine 4'-phosphoryl)serine. Residues 6814 to 7194 (ILLTGATGFL…KSISYMRQIG (381 aa)) form a thioesterase (TE) domain region. Residues 6895–6915 (STVEGRDHPGSESGSTAGPAE) form a disordered region.

The protein belongs to the NRP synthetase family.

Its pathway is secondary metabolite biosynthesis. Nonribosomal peptide synthetase; part of the gene cluster that mediates the biosynthesis of aspercryptins, linear lipopeptides built from six amino acids including 2 highly unusual and nonproteogenic amino acids, 2-amino-octanoic acid (2aoa) and 2-amino-dodecanol (2adol). The core structure of aspercryptins is as follows: Ser/Ala-Thr-Ile/Val-2aoa-Asn-2adol. The first step of aspercryptin biosynthesis is the generation of the fatty acid precursors, octanoic and dodecanoic acids, by the FAS subunits atnF and atnM. The fatty acid precursors are likely transformed into the corresponding alpha-amino fatty acids in three steps. First, they are hydroxylated by the cytochrome P450 monooxygenase atnE, then oxidized to the corresponding alpha-keto acids by the NAD(P)-dependent oxidoreductase atnD, and finally converted to the alpha-amino fatty acids by the PLP-dependent aminotransferases atnH or atnJ. the alpha-amino fatty acids, 2-amino-octanoic and 2-amino-dodecanoic acids, are recognized, activated, and covalently tethered to the NRPS atnA by its fourth and sixth adenylation domains. The second module of atnA is the Thr module and contains an epimerase (E) domain responsible for the epimerization of Thr to D-allo-Thr. Additionally, despite atnA having only one epimerase domain, the first amino acid of aspercryptin A1 is D-Ser, suggesting that serine is either loaded directly as D-Ser on the first module or that the epimerase domain in the threonine module epimerizes both L-Ser and L-Thr. After condensation of the hexapeptide of aspercryptin, the C-terminal reductase (TE) domain might be involved in the reductive release and production of the aldehyde hexapeptide. Further reduction would generate aspercryptins. The variety of aspercryptins produced reflects the flexibility of the atnA NRPS, allowing incorporation of alanine instead of serine, valine for isoleucine, and a C10 fatty amino alcohol instead of the C12 version. AtnB seems to be involved in the selectivity for Ile versus Val by the third module. Moreover, type B, C and D aspercryptins have an additional N-terminal cichorine, acetyl and propionyl group respectively. The protein is Nonribosomal peptide synthetase atnA of Emericella nidulans (strain FGSC A4 / ATCC 38163 / CBS 112.46 / NRRL 194 / M139) (Aspergillus nidulans).